We begin with the raw amino-acid sequence, 433 residues long: Eukaryotic peptide chain release factor subunit 1 (433 aa).

N5-methylglutamine is present on Gln182. Ser425 carries the phosphoserine modification.

The protein belongs to the eukaryotic release factor 1 family. Component of the eRF1-eRF3-GTP ternary complex, composed of sup45/eRF1, sup35/eRF3 and GTP.

Its subcellular location is the cytoplasm. Its function is as follows. Component of the eRF1-eRF3-GTP ternary complex, a ternary complex that mediates translation termination in response to the termination codons. The eRF1-eRF3-GTP complex binds to a stop codon in the ribosomal A-site. Sup45/eRF1 is responsible for stop codon recognition and inducing hydrolysis of peptidyl-tRNA. Following GTP hydrolysis by sup35/eRF3, sup35/eRF3 dissociates, permitting sup45/eRF1 to accommodate fully in the A-site. The chain is Eukaryotic peptide chain release factor subunit 1 (sup45) from Schizosaccharomyces pombe (strain 972 / ATCC 24843) (Fission yeast).